The following is a 468-amino-acid chain: Protein wingless (468 aa).

An N-terminal signal peptide occupies residues 1 to 17; that stretch reads MDISYIFVICLMALCSG. The interval 83-106 is binds porcupine; it reads VKGANLAISECQHQFRNRRWNCST. Cys-93 and Cys-104 are disulfide-bonded. N-linked (GlcNAc...) asparagine glycans are attached at residues Asn-103 and Asn-108. Disulfide bonds link Cys-146–Cys-154, Cys-156–Cys-185, Cys-233–Cys-247, and Cys-235–Cys-242. The O-palmitoleoyl serine; by PORCN moiety is linked to residue Ser-239. The disordered stretch occupies residues 333 to 362; it reads ISKIHHPNMPSPNSLPQAGQRGGRNGRRQG. 6 disulfide bridges follow: Cys-397–Cys-428, Cys-413–Cys-423, Cys-427–Cys-467, Cys-443–Cys-458, Cys-445–Cys-455, and Cys-450–Cys-451. N-linked (GlcNAc...) asparagine glycosylation occurs at Asn-414.

The protein belongs to the Wnt family. As to quaternary structure, monomer; folds by intramolecular disulfide bonds. Interacts with porcupine (por). Interacts with wls; in the Golgi. Interacts with en. Interacts with the proteoglycan Cow (heparan sulfate-bound form); this stabilizes wg and promotes its extracellular distribution. Interacts with peg; the interaction facilitates short-range diffusion of wg. Post-translationally, palmitoleoylated by porcupine. The lipid group functions as a sorting signal, targeting the ligand to polarized vesicles that transport wg to unique sites at the cell surface. Depalmitoleoylated by notum, leading to inhibit Wnt signaling pathway. Major form is glycosylated at 2 sites, glycosylation is stimulated by porcupine at the ER. In terms of tissue distribution, segmented expression in embryos. In embryonic tracheal cells, expression is in stripes flanking the tracheal placode.

It is found in the secreted. The protein resides in the synapse. It localises to the membrane. The protein localises to the extracellular space. Its subcellular location is the extracellular matrix. Binds as a ligand to a family of frizzled seven-transmembrane receptors and acts through a cascade of genes on the nucleus. Segment polarity protein. May be a growth factor. Acts on neighboring cells to regulate at least one gene, the homeobox segmentation gene engrailed. Wg signal represses arm phosphorylation. Wg signaling operates by inactivating the sgg repression of engrailed autoactivation. Wg and Wnt2 have a role in the developing trachea and together are responsible for all dorsal trunk formation. Wg also acts in the developing epidermis. Acts as a morphogen, and diffuses long distances despite its lipidation. Lipophorin is required for diffusion, probably by acting as vehicle for its movement, explaining how it can spread over long distances despite its lipidation. In non-neuronal cells, wls directs wg secretion via clathrin-mediated endocytosis and the retromer complex (a conserved protein complex consisting of Vps26 and Vps35) to sustain a wls traffic loop encompassing the Golgi, the cell surface, an endocytic compartment and a retrograde route leading back to the Golgi. In neuronal cells (the larval motorneuron NMJ), wg signal moves across the synapse through the release of wls-containing exosome-like vesicles. This is Protein wingless (wg) from Drosophila melanogaster (Fruit fly).